The chain runs to 313 residues: 2-oxoglutarate-dependent dioxygenase eupC (313 aa).

The region spanning 187–284 is the Fe2OG dioxygenase domain; the sequence is PSIPMRFLHY…LNAKALDGSG (98 aa). 3 residues coordinate Fe cation: His-212, Asp-214, and His-263. Lys-274 serves as a coordination point for 2-oxoglutarate.

Belongs to the iron/ascorbate-dependent oxidoreductase family. Fe(2+) is required as a cofactor.

It functions in the pathway secondary metabolite biosynthesis; terpenoid biosynthesis. Its function is as follows. 2-oxoglutarate-dependent dioxygenase; part of the gene cluster that mediates the biosynthesis of eupenifeldin, a bistropolone meroterpenoid that acts as an antitumor agent. The first step of eupenifeldin biosynthesis is the biosynthesis of 3-methylorcinaldehyde performed by the non-reducing polyketide synthase eupA. Oxidative dearomatization of 3-methylorcinaldehyde likely catalyzed by the FAD-dependent monooxygenase eupB is followed by oxidative ring expansion by the 2-oxoglutarate-dependent dioxygenase eupC to provide the first tropolone metabolite, tropolone stipitaldehyde. In parallel, generation of sesquiterpene alpha-humulene from farnesylpyrophosphate (FPP) is catalyzed by the terpene cyclase eupE. The cytochrome P450 monooxygenase eupD then hydroxylates humulene to humulenol. The putative Diels-Alderase eupF probably catalyzes the formation of the tropolone-humulene skeleton by linking humulenol and the polyketide moiety. The short-chain dehydrogenase/reductase eupG and the flavin-dependent monooxygenase eupH are also essential for eupenifeldin biosynthesis and are likely the additional decorating enzymes of the tropolone-humulene skeleton to produce final eupenifeldin or derivatives. This chain is 2-oxoglutarate-dependent dioxygenase eupC, found in Phoma sp.